A 363-amino-acid polypeptide reads, in one-letter code: Peptide chain release factor 2 (363 aa).

Glutamine 251 is modified (N5-methylglutamine).

This sequence belongs to the prokaryotic/mitochondrial release factor family. Methylated by PrmC. Methylation increases the termination efficiency of RF2.

It localises to the cytoplasm. Functionally, peptide chain release factor 2 directs the termination of translation in response to the peptide chain termination codons UGA and UAA. The polypeptide is Peptide chain release factor 2 (Helicobacter pylori (strain G27)).